Reading from the N-terminus, the 1016-residue chain is S-layer protein A (1016 aa).

An N-terminal signal peptide occupies residues 1–30; the sequence is MDLSTKKVISAGLVFIYALSLAMLVPMFLA.

The protein belongs to the Sulfolobales SlaA family. The mushroom-shaped unit cells of the Sulfolobales' S-layers may consist of three SlaB subunits and six SlaA subunits.

It localises to the secreted. Its subcellular location is the cell wall. It is found in the S-layer. S-layer large protein. May form the highly ordered outer sheath. The polypeptide is S-layer protein A (Acidianus ambivalens (Desulfurolobus ambivalens)).